The sequence spans 174 residues: Co-chaperone protein HscB homolog (174 aa).

A J domain is found at 2-74 (NYFELFKFSP…IRRAEHMLSL (73 aa)).

The protein belongs to the HscB family. As to quaternary structure, interacts with HscA and stimulates its ATPase activity.

In terms of biological role, co-chaperone involved in the maturation of iron-sulfur cluster-containing proteins. Seems to help targeting proteins to be folded toward HscA. The polypeptide is Co-chaperone protein HscB homolog (Shewanella baltica (strain OS223)).